A 180-amino-acid chain; its full sequence is Beta-lactoglobulin-1/B (180 aa).

An N-terminal signal peptide occupies residues 1–18 (MKCLLLALGLALACGVQA). Disulfide bonds link Cys84/Cys178, Cys124/Cys137, and Cys124/Cys139.

It belongs to the calycin superfamily. Lipocalin family. Under physiological conditions beta-lactoglobulin exists as an equilibrium mixture of monomeric and dimeric forms. In terms of processing, alternate disulfide bonds occur in equal amounts.

It is found in the secreted. Its function is as follows. Lactoglobulin is the primary component of whey, it binds retinol and is probably involved in the transport of that molecule. This chain is Beta-lactoglobulin-1/B, found in Ovis aries (Sheep).